We begin with the raw amino-acid sequence, 442 residues long: Putative ammonium transporter sll1017 (442 aa).

Helical transmembrane passes span 5–25, 44–64, 81–101, 104–124, 133–153, 155–175, 193–213, 240–260, 269–289, 299–319, 325–345, 354–374, and 386–406; these read NFPLARYVLGAMLAFLFVGVA, LFLLAAAVLVLFMQAGFAMLE, TFDVCVGVLLYFLFGYSLMYG, PVLGGFFGWGGFGITNNLDNV, WLFQAAFAATAATIVSGAVMG, MYFKAYLIYSAVITGLVYPIS, FAGSLLVHSVGGFAALAAVVV, GVFILWVGWYGFNPGSQLAFV, MLIAVNTTLSAAAGGLAALAF, PNLLVTLNGILGGLVGITAGC, WSAIAIGVVAGILSVLGTKLL, VGAWPVHGLCGIWGGIAVGIF, and IVGSLVIPFWAFITMFFLFYV.

Belongs to the ammonia transporter channel (TC 1.A.11.2) family.

It localises to the cell membrane. In Synechocystis sp. (strain ATCC 27184 / PCC 6803 / Kazusa), this protein is Putative ammonium transporter sll1017.